The primary structure comprises 719 residues: Polyribonucleotide nucleotidyltransferase (719 aa).

Positions 491 and 497 each coordinate Mg(2+). The 60-residue stretch at 558–617 (PRMLTIKINPEKIRDVIGKGGATIRALTEETGTQIDISDDGTIVIASVDEAQAKEAQRRI) folds into the KH domain. The region spanning 627–695 (GQVYDGSVLR…DKGRLRLSVK (69 aa)) is the S1 motif domain.

The protein belongs to the polyribonucleotide nucleotidyltransferase family. Mg(2+) serves as cofactor.

Its subcellular location is the cytoplasm. The enzyme catalyses RNA(n+1) + phosphate = RNA(n) + a ribonucleoside 5'-diphosphate. Its function is as follows. Involved in mRNA degradation. Catalyzes the phosphorolysis of single-stranded polyribonucleotides processively in the 3'- to 5'-direction. In Bordetella petrii (strain ATCC BAA-461 / DSM 12804 / CCUG 43448), this protein is Polyribonucleotide nucleotidyltransferase.